Here is a 214-residue protein sequence, read N- to C-terminus: MASEQRWIPLESNPKVLNKYVHNLGMDAGWNFVDVFGLDPELLAMVPRPAAALVLLFPDDKETVNQLIGEYQSDYPDSLYYTKQTIGNACGTVAIVHALANNENVIPFDAAKHFKTFLEKTKPLNPEERAKHLEQDNLMGAAHGDCAQEGDTQAPSQDEHVKSHFVALVHCNGTLYELDGRKEAPVVHGTTSADTFLEDAAEVVKKFMARDPEI.

The UCH catalytic domain occupies 6–214 (RWIPLESNPK…KKFMARDPEI (209 aa)). Cys-90 (nucleophile) is an active-site residue. His-164 serves as the catalytic Proton donor.

It belongs to the peptidase C12 family.

It is found in the cytoplasm. It carries out the reaction Thiol-dependent hydrolysis of ester, thioester, amide, peptide and isopeptide bonds formed by the C-terminal Gly of ubiquitin (a 76-residue protein attached to proteins as an intracellular targeting signal).. In terms of biological role, ubiquitin-protein hydrolase is involved both in the processing of ubiquitin precursors and of ubiquitinated proteins. This enzyme is a thiol protease that recognizes and hydrolyzes a peptide bond at the C-terminal glycine of ubiquitin. This chain is Ubiquitin carboxyl-terminal hydrolase (UCH), found in Aplysia californica (California sea hare).